A 234-amino-acid polypeptide reads, in one-letter code: N-acetyl-alpha-D-glucosaminyl L-malate deacetylase 1 (234 aa).

Zn(2+) contacts are provided by His12, Asp15, and His113.

This sequence belongs to the PIGL family. Requires Zn(2+) as cofactor.

It catalyses the reaction (S)-malyl N-acetyl-alpha-D-glucosaminide + H2O = (S)-malyl alpha-D-glucosaminide + acetate. Inhibited by BSH. Functionally, involved in bacillithiol (BSH) biosynthesis. Catalyzes the second step of the pathway, the deacetylation of N-acetylglucosaminylmalate (GlcNAc-Mal) to glucosamine malate (GlcN-Mal). The protein is N-acetyl-alpha-D-glucosaminyl L-malate deacetylase 1 of Bacillus anthracis.